The sequence spans 468 residues: MSSGKITQVVGPVVDVAFAAEDKLPEINNALVVYKNDDSKQKVVLEVALELGDGVVRTIAMESTDGLTRGMEVLDTGRPISVPVGKETLGRVFNVLGDTIDLEESFPADFEREPIHKKAPAFDELSTSSEILETGIKVIDLLAPYLKGGKVGLFGGAGVGKTVLIQELIHNIAQEHGGISVFTGVGERTREGNDLYWEMKESGVIEKTAMVFGQMNEPPGARMRVALTGLTIAEYFRDVEGQDVLLFIDNIFRFTQAGSEVSALLGRMPSAVGYQPTLATEMGQLQERITSTKKGSVTSIQAIYVPADDYTDPAPATAFAHLDSTTNLERKLTQLGIYPAVDPLASSSRALAPQIVGEEHYAVAMEVKRVLQRYQELQDIIAILGMDELSDEEKTLVGRARRIQFFLSQNFNVAEQFTGMPGSYVPVAETVKGFKEILDGKHDHLPEDAFRNVGSIEDVVAKAAKMKF.

Glycine 155 to threonine 162 contacts ATP.

This sequence belongs to the ATPase alpha/beta chains family. As to quaternary structure, F-type ATPases have 2 components, CF(1) - the catalytic core - and CF(0) - the membrane proton channel. CF(1) has five subunits: alpha(3), beta(3), gamma(1), delta(1), epsilon(1). CF(0) has three main subunits: a(1), b(2) and c(9-12). The alpha and beta chains form an alternating ring which encloses part of the gamma chain. CF(1) is attached to CF(0) by a central stalk formed by the gamma and epsilon chains, while a peripheral stalk is formed by the delta and b chains.

It is found in the cell membrane. The catalysed reaction is ATP + H2O + 4 H(+)(in) = ADP + phosphate + 5 H(+)(out). Functionally, produces ATP from ADP in the presence of a proton gradient across the membrane. The catalytic sites are hosted primarily by the beta subunits. This Streptococcus suis (strain 98HAH33) protein is ATP synthase subunit beta.